We begin with the raw amino-acid sequence, 2104 residues long: Myosin type-2 heavy chain 2 (2104 aa).

In terms of domain architecture, Myosin N-terminal SH3-like spans 35–85 (DERTWIWIPDSKESFVKAWIVEDLGEKYRVKLERDGSERIVDGFDAEKVNP). The Myosin motor domain maps to 89–767 (DMVDDMAALT…VLGSLEDRRN (679 aa)). Residue 182 to 189 (GESGAGKT) coordinates ATP. The segment at 646–660 (LSSLMHQLEATQPHF) is actin-binding. Positions 829–2104 (LGTTQTDEYL…RSNRSPSVLR (1276 aa)) form a coiled coil. Disordered stretches follow at residues 1245–1278 (NRSV…DGNN) and 1398–1426 (MEFT…SKRS). Positions 1246-1259 (RSVTQHTLDGNSPH) are enriched in polar residues. Residues 1261–1278 (SFEEKHSGDPLKRIDGNN) are compositionally biased toward basic and acidic residues. Residues 1409 to 1424 (SKISNLPSSQPGSPSK) are compositionally biased toward polar residues. At S1421 the chain carries Phosphoserine.

The protein belongs to the TRAFAC class myosin-kinesin ATPase superfamily. Myosin family. In terms of assembly, binds to cdc4 and rlc1.

Functionally, stabilizes the F-actin cables forming the F-actin ring that surrounds the nucleus during interphase. May work in conjunction with myo2. This Schizosaccharomyces pombe (strain 972 / ATCC 24843) (Fission yeast) protein is Myosin type-2 heavy chain 2 (myo3).